Reading from the N-terminus, the 455-residue chain is Exodeoxyribonuclease 7 large subunit (455 aa).

Belongs to the XseA family. As to quaternary structure, heterooligomer composed of large and small subunits.

It localises to the cytoplasm. It carries out the reaction Exonucleolytic cleavage in either 5'- to 3'- or 3'- to 5'-direction to yield nucleoside 5'-phosphates.. Bidirectionally degrades single-stranded DNA into large acid-insoluble oligonucleotides, which are then degraded further into small acid-soluble oligonucleotides. This Escherichia coli (strain SMS-3-5 / SECEC) protein is Exodeoxyribonuclease 7 large subunit.